The primary structure comprises 394 residues: Putative nickel insertion protein (394 aa).

The protein belongs to the LarC family.

This is Putative nickel insertion protein from Syntrophotalea carbinolica (strain DSM 2380 / NBRC 103641 / GraBd1) (Pelobacter carbinolicus).